Consider the following 291-residue polypeptide: Transmembrane protein 41B (291 aa).

Over residues Met-1–Pro-11 the composition is skewed to basic and acidic residues. The disordered stretch occupies residues Met-1–Pro-43. At Thr-18 the chain carries Phosphothreonine. Ser-35 is modified (phosphoserine). The next 6 membrane-spanning stretches (helical) occupy residues Thr-52–Tyr-72, Phe-109–Ile-129, Leu-147–Leu-169, Leu-197–Ile-217, Pro-225–Ile-245, and Ser-262–Phe-282. Residues Gly-140 to Leu-251 form a VTT domain; required for its function in autophagy region.

This sequence belongs to the TMEM41 family. In terms of assembly, interacts with VMP1. Interacts with COPA, COPB1, VDAC1 and ERLIN2. Interacts with ATG2A. Interacts with SURF4. In terms of tissue distribution, expressed in brain, spinal cord, kidney and first lumbar dorsal root ganglia during postnatal development. Expressed in motor neurons and proprioceptive neurons.

Its subcellular location is the endoplasmic reticulum membrane. It is found in the endomembrane system. It carries out the reaction a 1,2-diacyl-sn-glycero-3-phospho-L-serine(in) = a 1,2-diacyl-sn-glycero-3-phospho-L-serine(out). The catalysed reaction is cholesterol(in) = cholesterol(out). The enzyme catalyses a 1,2-diacyl-sn-glycero-3-phosphocholine(in) = a 1,2-diacyl-sn-glycero-3-phosphocholine(out). It catalyses the reaction a 1,2-diacyl-sn-glycero-3-phosphoethanolamine(in) = a 1,2-diacyl-sn-glycero-3-phosphoethanolamine(out). Phospholipid scramblase involved in lipid homeostasis and membrane dynamics processes. Has phospholipid scramblase activity toward cholesterol and phosphatidylserine, as well as phosphatidylethanolamine and phosphatidylcholine. Required for autophagosome formation: participates in early stages of autophagosome biogenesis at the endoplasmic reticulum (ER) membrane by reequilibrating the leaflets of the ER as lipids are extracted by ATG2 (ATG2A or ATG2B) to mediate autophagosome assembly. In addition to autophagy, involved in other processes in which phospholipid scramblase activity is required. Required for normal motor neuron development. The chain is Transmembrane protein 41B from Mus musculus (Mouse).